Consider the following 263-residue polypeptide: 3-deoxy-manno-octulosonate cytidylyltransferase 1 (263 aa).

It belongs to the KdsB family.

The protein resides in the cytoplasm. The catalysed reaction is 3-deoxy-alpha-D-manno-oct-2-ulosonate + CTP = CMP-3-deoxy-beta-D-manno-octulosonate + diphosphate. It participates in nucleotide-sugar biosynthesis; CMP-3-deoxy-D-manno-octulosonate biosynthesis; CMP-3-deoxy-D-manno-octulosonate from 3-deoxy-D-manno-octulosonate and CTP: step 1/1. It functions in the pathway bacterial outer membrane biogenesis; lipopolysaccharide biosynthesis. Its function is as follows. Activates KDO (a required 8-carbon sugar) for incorporation into bacterial lipopolysaccharide in Gram-negative bacteria. This is 3-deoxy-manno-octulosonate cytidylyltransferase 1 from Burkholderia ambifaria (strain ATCC BAA-244 / DSM 16087 / CCUG 44356 / LMG 19182 / AMMD) (Burkholderia cepacia (strain AMMD)).